A 187-amino-acid polypeptide reads, in one-letter code: Elongation factor P (187 aa).

This sequence belongs to the elongation factor P family.

Its subcellular location is the cytoplasm. Its pathway is protein biosynthesis; polypeptide chain elongation. Functionally, involved in peptide bond synthesis. Stimulates efficient translation and peptide-bond synthesis on native or reconstituted 70S ribosomes in vitro. Probably functions indirectly by altering the affinity of the ribosome for aminoacyl-tRNA, thus increasing their reactivity as acceptors for peptidyl transferase. The protein is Elongation factor P of Acidothermus cellulolyticus (strain ATCC 43068 / DSM 8971 / 11B).